The following is a 142-amino-acid chain: Large ribosomal subunit protein bL17 (142 aa).

Belongs to the bacterial ribosomal protein bL17 family. In terms of assembly, part of the 50S ribosomal subunit. Contacts protein L32.

The polypeptide is Large ribosomal subunit protein bL17 (Protochlamydia amoebophila (strain UWE25)).